The primary structure comprises 251 residues: HTH-type transcriptional regulator UlaR (251 aa).

An HTH deoR-type domain is found at Glu3–Ala58. Positions Val20–Asp39 form a DNA-binding region, H-T-H motif.

It is found in the cytoplasm. Its function is as follows. Represses ulaG and the ulaABCDEF operon. In Escherichia coli (strain SMS-3-5 / SECEC), this protein is HTH-type transcriptional regulator UlaR.